A 274-amino-acid polypeptide reads, in one-letter code: Bis(5'-nucleosyl)-tetraphosphatase, symmetrical (274 aa).

Belongs to the Ap4A hydrolase family.

The enzyme catalyses P(1),P(4)-bis(5'-adenosyl) tetraphosphate + H2O = 2 ADP + 2 H(+). In terms of biological role, hydrolyzes diadenosine 5',5'''-P1,P4-tetraphosphate to yield ADP. This is Bis(5'-nucleosyl)-tetraphosphatase, symmetrical from Shewanella loihica (strain ATCC BAA-1088 / PV-4).